A 172-amino-acid chain; its full sequence is Adenine phosphoribosyltransferase (172 aa).

This sequence belongs to the purine/pyrimidine phosphoribosyltransferase family. As to quaternary structure, homodimer.

It localises to the cytoplasm. The enzyme catalyses AMP + diphosphate = 5-phospho-alpha-D-ribose 1-diphosphate + adenine. It functions in the pathway purine metabolism; AMP biosynthesis via salvage pathway; AMP from adenine: step 1/1. Catalyzes a salvage reaction resulting in the formation of AMP, that is energically less costly than de novo synthesis. The chain is Adenine phosphoribosyltransferase from Nostoc punctiforme (strain ATCC 29133 / PCC 73102).